Here is a 643-residue protein sequence, read N- to C-terminus: Threonine--tRNA ligase (643 aa).

The TGS domain occupies Met-1–Thr-61. Residues Asp-243–Pro-534 form a catalytic region. Residues Cys-334, His-385, and His-511 each coordinate Zn(2+).

It belongs to the class-II aminoacyl-tRNA synthetase family. As to quaternary structure, homodimer. It depends on Zn(2+) as a cofactor.

The protein resides in the cytoplasm. It catalyses the reaction tRNA(Thr) + L-threonine + ATP = L-threonyl-tRNA(Thr) + AMP + diphosphate + H(+). Its function is as follows. Catalyzes the attachment of threonine to tRNA(Thr) in a two-step reaction: L-threonine is first activated by ATP to form Thr-AMP and then transferred to the acceptor end of tRNA(Thr). Also edits incorrectly charged L-seryl-tRNA(Thr). The sequence is that of Threonine--tRNA ligase from Actinobacillus pleuropneumoniae serotype 5b (strain L20).